Here is a 380-residue protein sequence, read N- to C-terminus: Shaggy-related protein kinase eta (380 aa).

One can recognise a Protein kinase domain in the interval 40–324 (YMAERVVGTG…ALEACAHPFF (285 aa)). Residues 46 to 54 (VGTGSFGIV) and Lys69 contribute to the ATP site. At Thr104 the chain carries Phosphothreonine. Ser105 carries the phosphoserine modification. Residue Asp165 is the Proton acceptor of the active site. Ser187 is subject to Phosphoserine. Residue Tyr200 is modified to Phosphotyrosine. 2 positions are modified to phosphothreonine: Thr220 and Thr261. Residue Ser310 is modified to Phosphoserine. Thr314 is subject to Phosphothreonine. The residue at position 353 (Ser353) is a Phosphoserine.

Belongs to the protein kinase superfamily. CMGC Ser/Thr protein kinase family. GSK-3 subfamily. In terms of assembly, interacts in vitro with the C-terminal fragment of BZR1 and with BES1/BZR2, but not through the kinase domain. Interacts with BHLH150, beet curly top virus AL4/C4 and tomato golden mosaic virus AL4/AC4. Interacts with YDA. Interacts with MKK4. Interacts with KIB1 and KIB2 in a brassinosteroid (BR)-dependent manner. Interacts with BSK1, BSK6, BSK8 and BSK11. Binds to WRKY46, WRKY54 and WRKY70. Component of a complex made of POLAR, BASL, ASK7/BIN2 and ASK3/SK12. Binds to POLAR and BASL. Post-translationally, autophosphorylated mainly on threonine and serine residues. In terms of processing, ubiquitination and subsequent proteasomal degradation mediated by KIB1. As to expression, in the two outer cell layers of the developing seed coat and restricted to the suspensor cells in developing embryos. Mostly expressed in stomatal lineage cells with asymmetric cell division (ACD) potential. Observed in small cells of non-protruding hypocotyl cell files and of developing cotyledon epidermis.

The protein resides in the cytoplasm. Its subcellular location is the cell cortex. The protein localises to the nucleus. It is found in the cell membrane. The enzyme catalyses L-seryl-[protein] + ATP = O-phospho-L-seryl-[protein] + ADP + H(+). It catalyses the reaction L-threonyl-[protein] + ATP = O-phospho-L-threonyl-[protein] + ADP + H(+). Inactivated by an unknown mechanism after binding of brassinosteroids to the brassinosteroid receptor complex. Inhibited by lithium. Inhibited by dephosphorylation at Tyr-200 by BSU1. Competitive inhibition by KIB1 that reduces substrate (e.g. BZR1) access. Repressed by bikinin. Its function is as follows. Negative regulator in brassinosteroid signal transduction pathway important for plant growth. May be also involved in auxin signaling pathway. Phosphorylates and increases the degradation of BZR1 and BZR2/BES1 by the proteasome. Phosphorylates BHLH150, beet curly top virus C4 and tomato golden mosaic virus AC4 on threonine and serine residues. Upon brassinosteroid signaling, inhibits stomatal development by phosphorylating and inhibiting the MAPKK kinase YDA and the MAPK kinases MKK4 and MKK5. Phosphorylates BSK1, BSK3, BSK5, BSK6, BSK8 and BSK11 in vitro. Phoyphorylates and destabilizes WRKY46, WRKY54 and WRKY70. Mediates BASL nuclear exclusion; kinase activity is required for this function. Required first at the cortical polarity site, to restrict MAPK signaling and promote asymmetric cell division (ACD), and second in the nucleus of stomatal lineage ground cells (SLGCs) or meristemoids, to limit cell division and to promote differentiation into pavement or stomatal guard cells, respectively, likely by initiating BASL polarization. Phosphorylates BASL, YDA and SPCH in vitro and POLAR in vivo. Phosphorylates and inhibits SPCH in the nucleus of SLGC undergoing ACD, thus negatively regulating stomatal development. This is Shaggy-related protein kinase eta from Arabidopsis thaliana (Mouse-ear cress).